A 910-amino-acid chain; its full sequence is DNA mismatch repair protein MutS (910 aa).

Residues 1–15 (MPRSAAQSEEQTLQG) are compositionally biased toward polar residues. The segment at 1 to 94 (MPRSAAQSEE…EPAWAHHSQV (94 aa)) is disordered. Low complexity predominate over residues 44-54 (DASLSADAAAR). 726-733 (GPNASGKS) contacts ATP.

The protein belongs to the DNA mismatch repair MutS family.

Functionally, this protein is involved in the repair of mismatches in DNA. It is possible that it carries out the mismatch recognition step. This protein has a weak ATPase activity. In Synechococcus sp. (strain WH7803), this protein is DNA mismatch repair protein MutS.